We begin with the raw amino-acid sequence, 734 residues long: Mechanosensitive ion channel protein 10 (734 aa).

Disordered regions lie at residues 1-75 (MAEQ…LTQR) and 115-136 (SFSR…APVT). Basic and acidic residues predominate over residues 24–39 (EASRRSKEMASPESEK). At Ser-34 the chain carries Phosphoserine. Polar residues-rich tracts occupy residues 65 to 75 (PNQNNVGLTQR) and 117 to 129 (SRAS…NRSV). Ser-128 and Ser-131 each carry phosphoserine. The next 6 membrane-spanning stretches (helical) occupy residues 164–184 (ISTL…ALVA), 196–216 (FWGL…SGML), 249–269 (SVQV…LFNH), 288–308 (LISI…LKIL), 516–536 (LVTA…LEVA), and 551–571 (LAFI…FVFV).

This sequence belongs to the MscS (TC 1.A.23) family. In terms of tissue distribution, detected in the root tip and throughout the vasculature of the root and leaf.

It is found in the cell membrane. Functionally, mechanosensitive channel that opens in response to stretch forces in the membrane lipid bilayer. The chain is Mechanosensitive ion channel protein 10 (MSL10) from Arabidopsis thaliana (Mouse-ear cress).